We begin with the raw amino-acid sequence, 312 residues long: Nicotinamide adenine dinucleotide transporter 1, chloroplastic (312 aa).

Solcar repeat units follow at residues 11–103 (KNVL…LKSF), 111–199 (LSVG…IKVY), and 211–299 (LNAR…VHRF). A run of 6 helical transmembrane segments spans residues 17 to 37 (AAAG…LDVI), 78 to 98 (GLSP…TMYD), 117 to 137 (VLAA…LWVV), 171 to 191 (GLYS…IQFP), 216 to 232 (VAVA…TLTY), and 271 to 293 (FYRG…FTSF).

The protein belongs to the mitochondrial carrier (TC 2.A.29) family. Highly expressed in young leaf mesophyll cells, root tips and at the branches of adventitious roots. Low expression in all flower tissues and not detected in siliques and seeds.

The protein localises to the plastid. The protein resides in the chloroplast membrane. Its activity is regulated as follows. Inhibited by pyridoxal 5'-phosphate, bathophenanthroline, tannic acid, mersalyl, mercuric chloride, p-hydroxymercuribenzoate, p-hydroxymercuribenzoate sulfonate, bromocresol purple and N-ethylmaleimide. In terms of biological role, mediates the NAD(+) import into chloroplast. Favors the NAD(+)(in)/ADP or AMP(out) antiport exchange, but is also able to catalyze a low unidirectional transport (uniport) of NAD(+). Transports NAD(+), nicotinic acid adenine dinucleotide, nicotinamide mononucleotide, nicotinic acid mononucleotide, FAD, FMN, TTP, TDP, TMP, UTP, UDP, UMP, CTP, CDP, CMP, GTP, GDP, GMP, 3'-AMP, ATP, ADP, and AMP, has low transport activity with cAMP, pyrophosphate, NADH and alpha-NAD(+), and has no activity with NADP(+), NADPH, nicotinamide, nicotinic acid, adenosine, thiamine mono- or diphosphate, inorganic phosphate, CoA, folate, NaCl, malate, malonate, citrate, fumarate, aspartate, glutamate, S-adenosylmethionine, lysine, arginine, and ornithine. The sequence is that of Nicotinamide adenine dinucleotide transporter 1, chloroplastic (NDT1) from Arabidopsis thaliana (Mouse-ear cress).